A 617-amino-acid polypeptide reads, in one-letter code: tRNA uridine 5-carboxymethylaminomethyl modification enzyme MnmG (617 aa).

Residues 9–14 (GAGHAG), Val121, and Thr176 contribute to the FAD site. 269-283 (GPRYCPSIEDKFVRF) is a binding site for NAD(+). Gln366 is an FAD binding site.

This sequence belongs to the MnmG family. In terms of assembly, homodimer. Heterotetramer of two MnmE and two MnmG subunits. FAD serves as cofactor.

The protein localises to the cytoplasm. NAD-binding protein involved in the addition of a carboxymethylaminomethyl (cmnm) group at the wobble position (U34) of certain tRNAs, forming tRNA-cmnm(5)s(2)U34. This is tRNA uridine 5-carboxymethylaminomethyl modification enzyme MnmG from Acholeplasma laidlawii (strain PG-8A).